Consider the following 546-residue polypeptide: ATP synthase subunit alpha (546 aa).

Residue 172–179 participates in ATP binding; that stretch reads GDRKTGKT. 2 stretches are compositionally biased toward polar residues: residues 511–520 and 536–546; these read FRTTEGNNLG and TELNVSRKTAK. The disordered stretch occupies residues 511–546; that stretch reads FRTTEGNNLGTEAPVDPLAADDVNKTELNVSRKTAK.

It belongs to the ATPase alpha/beta chains family. In terms of assembly, F-type ATPases have 2 components, CF(1) - the catalytic core - and CF(0) - the membrane proton channel. CF(1) has five subunits: alpha(3), beta(3), gamma(1), delta(1), epsilon(1). CF(0) has three main subunits: a(1), b(2) and c(9-12). The alpha and beta chains form an alternating ring which encloses part of the gamma chain. CF(1) is attached to CF(0) by a central stalk formed by the gamma and epsilon chains, while a peripheral stalk is formed by the delta and b chains.

It is found in the cell membrane. The enzyme catalyses ATP + H2O + 4 H(+)(in) = ADP + phosphate + 5 H(+)(out). Produces ATP from ADP in the presence of a proton gradient across the membrane. The alpha chain is a regulatory subunit. This Corynebacterium aurimucosum (strain ATCC 700975 / DSM 44827 / CIP 107346 / CN-1) (Corynebacterium nigricans) protein is ATP synthase subunit alpha.